Here is a 213-residue protein sequence, read N- to C-terminus: ATP phosphoribosyltransferase (213 aa).

The protein belongs to the ATP phosphoribosyltransferase family. Short subfamily. As to quaternary structure, heteromultimer composed of HisG and HisZ subunits.

The protein resides in the cytoplasm. The catalysed reaction is 1-(5-phospho-beta-D-ribosyl)-ATP + diphosphate = 5-phospho-alpha-D-ribose 1-diphosphate + ATP. Its pathway is amino-acid biosynthesis; L-histidine biosynthesis; L-histidine from 5-phospho-alpha-D-ribose 1-diphosphate: step 1/9. Catalyzes the condensation of ATP and 5-phosphoribose 1-diphosphate to form N'-(5'-phosphoribosyl)-ATP (PR-ATP). Has a crucial role in the pathway because the rate of histidine biosynthesis seems to be controlled primarily by regulation of HisG enzymatic activity. This is ATP phosphoribosyltransferase from Shouchella clausii (strain KSM-K16) (Alkalihalobacillus clausii).